Here is a 185-residue protein sequence, read N- to C-terminus: Urease accessory protein UreE (185 aa).

The disordered stretch occupies residues 153-185 (LRANSAQGHGHSHSHSHDHHGYHHHGDGNWHKH). The span at 162–175 (GHSHSHSHDHHGYH) shows a compositional bias: basic residues. Residues 176–185 (HHGDGNWHKH) show a composition bias toward basic and acidic residues.

Belongs to the UreE family.

It is found in the cytoplasm. Functionally, involved in urease metallocenter assembly. Binds nickel. Probably functions as a nickel donor during metallocenter assembly. The sequence is that of Urease accessory protein UreE from Haemophilus influenzae (strain PittGG).